Consider the following 110-residue polypeptide: Small ubiquitin-related modifier 3 (110 aa).

Glycyl lysine isopeptide (Lys-Gly) (interchain with G-Cter in SUMO2) cross-links involve residues Lys-5 and Lys-7. Lys-11 is covalently cross-linked (Glycyl lysine isopeptide (Lys-Gly) (interchain with G-Cter in SUMO); alternate). Residue Lys-11 forms a Glycyl lysine isopeptide (Lys-Gly) (interchain with G-Cter in SUMO2); alternate linkage. In terms of domain architecture, Ubiquitin-like spans 15–92; the sequence is DHINLKVAGQ…IDVFQQQTGG (78 aa). Positions 88–101 are enriched in polar residues; sequence QQTGGSASRGSVPT. The tract at residues 88–110 is disordered; that stretch reads QQTGGSASRGSVPTPNRCPDLCY. Residue Gly-92 forms a Glycyl lysine isopeptide (Gly-Lys) (interchain with K-? in acceptor proteins) linkage. Positions 93-110 are excised as a propeptide; it reads SASRGSVPTPNRCPDLCY.

This sequence belongs to the ubiquitin family. SUMO subfamily. Interacts with SAE2 and UBE2I. Covalently attached to a number of proteins. Interacts with USP25 (via ts SIM domain); the interaction sumoylates USP25 and inhibits its ubiquitin hydrolyzing activity. Interacts with BMAL1. Post-translationally, polymeric chains can be formed through Lys-11 cross-linking. In terms of processing, cleavage of precursor form by SENP1, SENP2 or SENP5 is necessary for function.

It localises to the cytoplasm. The protein resides in the nucleus. Its subcellular location is the PML body. Ubiquitin-like protein which can be covalently attached to target lysines either as a monomer or as a lysine-linked polymer. Does not seem to be involved in protein degradation and may function as an antagonist of ubiquitin in the degradation process. Plays a role in a number of cellular processes such as nuclear transport, DNA replication and repair, mitosis and signal transduction. Covalent attachment to its substrates requires prior activation by the E1 complex SAE1-SAE2 and linkage to the E2 enzyme UBE2I, and can be promoted by an E3 ligase such as PIAS1-4, RANBP2 or CBX4. Plays a role in the regulation of sumoylation status of SETX. The polypeptide is Small ubiquitin-related modifier 3 (Mus musculus (Mouse)).